The chain runs to 427 residues: Putative tyrosine recombinase XerC (427 aa).

In terms of domain architecture, Core-binding (CB) spans 1 to 81; it reads MTPQQLTEEY…HLRTIWGYAI (81 aa). A Tyr recombinase domain is found at 116–305; the sequence is RARSWLSMQV…DYDHMRAVLH (190 aa). Active-site residues include Arg-156, Lys-183, His-256, Arg-259, and His-283. Tyr-292 (O-(3'-phospho-DNA)-tyrosine intermediate) is an active-site residue. 2 disordered regions span residues 323-384 and 401-427; these read SGSP…PPDT and RAAT…DSLA. The segment covering 350-362 has biased composition (basic and acidic residues); the sequence is ARTEPSEPREHTQ. The span at 402–413 shows a compositional bias: low complexity; that stretch reads AATASAVPAATS.

It belongs to the 'phage' integrase family.

It localises to the cytoplasm. Site-specific tyrosine recombinase, which acts by catalyzing the cutting and rejoining of the recombining DNA molecules. The sequence is that of Putative tyrosine recombinase XerC from Pseudomonas aeruginosa.